Reading from the N-terminus, the 282-residue chain is Bifunctional protein FolD (282 aa).

Residues 163-165, threonine 188, and isoleucine 229 contribute to the NADP(+) site; that span reads NRS.

The protein belongs to the tetrahydrofolate dehydrogenase/cyclohydrolase family. Homodimer.

It catalyses the reaction (6R)-5,10-methylene-5,6,7,8-tetrahydrofolate + NADP(+) = (6R)-5,10-methenyltetrahydrofolate + NADPH. It carries out the reaction (6R)-5,10-methenyltetrahydrofolate + H2O = (6R)-10-formyltetrahydrofolate + H(+). Its pathway is one-carbon metabolism; tetrahydrofolate interconversion. Functionally, catalyzes the oxidation of 5,10-methylenetetrahydrofolate to 5,10-methenyltetrahydrofolate and then the hydrolysis of 5,10-methenyltetrahydrofolate to 10-formyltetrahydrofolate. The chain is Bifunctional protein FolD from Malacoplasma penetrans (strain HF-2) (Mycoplasma penetrans).